The following is a 485-amino-acid chain: Glutamyl-tRNA(Gln) amidotransferase subunit A (485 aa).

Residues Lys79 and Ser154 each act as charge relay system in the active site. Ser178 (acyl-ester intermediate) is an active-site residue.

The protein belongs to the amidase family. GatA subfamily. In terms of assembly, heterotrimer of A, B and C subunits.

The enzyme catalyses L-glutamyl-tRNA(Gln) + L-glutamine + ATP + H2O = L-glutaminyl-tRNA(Gln) + L-glutamate + ADP + phosphate + H(+). Allows the formation of correctly charged Gln-tRNA(Gln) through the transamidation of misacylated Glu-tRNA(Gln) in organisms which lack glutaminyl-tRNA synthetase. The reaction takes place in the presence of glutamine and ATP through an activated gamma-phospho-Glu-tRNA(Gln). In Staphylococcus aureus (strain bovine RF122 / ET3-1), this protein is Glutamyl-tRNA(Gln) amidotransferase subunit A.